A 397-amino-acid chain; its full sequence is Elongation factor Tu (397 aa).

The region spanning 10–207 is the tr-type G domain; the sequence is KPHCNIGTIG…AVDEWIPQPE (198 aa). Residues 19–26 form a G1 region; that stretch reads GHVDHGKT. 19-26 contacts GTP; it reads GHVDHGKT. Mg(2+) is bound at residue threonine 26. The interval 61 to 65 is G2; it reads GITIS. A G3 region spans residues 82-85; it reads DCPG. GTP-binding positions include 82 to 86 and 137 to 140; these read DCPGH and NKVD. Residues 137–140 form a G4 region; the sequence is NKVD. A G5 region spans residues 175-177; it reads SAL.

Belongs to the TRAFAC class translation factor GTPase superfamily. Classic translation factor GTPase family. EF-Tu/EF-1A subfamily. Monomer.

The protein resides in the cytoplasm. The catalysed reaction is GTP + H2O = GDP + phosphate + H(+). In terms of biological role, GTP hydrolase that promotes the GTP-dependent binding of aminoacyl-tRNA to the A-site of ribosomes during protein biosynthesis. This Sphingopyxis alaskensis (strain DSM 13593 / LMG 18877 / RB2256) (Sphingomonas alaskensis) protein is Elongation factor Tu.